Reading from the N-terminus, the 729-residue chain is Rho GTPase-activating protein 28 (729 aa).

2 disordered regions span residues 20–42 (AQPP…LSRK) and 55–105 (SNES…AEVT). The span at 65-75 (SRSNSEASVDS) shows a compositional bias: polar residues. The residue at position 72 (Ser72) is a Phosphoserine. Over residues 80 to 89 (DFWREIESIK) the composition is skewed to basic and acidic residues. Position 159 is a phosphothreonine (Thr159). The tract at residues 176–236 (GVSESPPRDT…SQDKEGSFAV (61 aa)) is disordered. Over residues 195–204 (GTKEERELPR) the composition is skewed to basic and acidic residues. The span at 217 to 226 (SLNSTTLSDA) shows a compositional bias: polar residues. One can recognise a Rho-GAP domain in the interval 380–577 (VPLTVLLDGD…LMLKYQKILW (198 aa)). Positions 612 to 631 (TLERETASPKTSKVLQKSPS) are disordered. Over residues 619–630 (SPKTSKVLQKSP) the composition is skewed to polar residues.

Expressed in testis. Expressed at moderate level in kidney and ovary, and weakly expressed in spleen and skeletal muscle.

In terms of biological role, GTPase activator for the Rho-type GTPases by converting them to an inactive GDP-bound state. The sequence is that of Rho GTPase-activating protein 28 (ARHGAP28) from Homo sapiens (Human).